The primary structure comprises 254 residues: 5-oxoprolinase subunit A (254 aa).

This sequence belongs to the LamB/PxpA family. In terms of assembly, forms a complex composed of PxpA, PxpB and PxpC.

It carries out the reaction 5-oxo-L-proline + ATP + 2 H2O = L-glutamate + ADP + phosphate + H(+). Catalyzes the cleavage of 5-oxoproline to form L-glutamate coupled to the hydrolysis of ATP to ADP and inorganic phosphate. The protein is 5-oxoprolinase subunit A of Acinetobacter baumannii (strain ACICU).